We begin with the raw amino-acid sequence, 102 residues long: MFAIIETGGKQYKVKEHDIIRIEKLNASVGEEVTLSKVIALTGVDNEVIFTQNASVTASVLEQCRNDKVIIFKKKRRKNYRRKNGHRQYMTVLRITKINNME.

Belongs to the bacterial ribosomal protein bL21 family. As to quaternary structure, part of the 50S ribosomal subunit. Contacts protein L20.

Its function is as follows. This protein binds to 23S rRNA in the presence of protein L20. The protein is Large ribosomal subunit protein bL21 of Ehrlichia ruminantium (strain Gardel).